Here is a 136-residue protein sequence, read N- to C-terminus: Small ribosomal subunit protein bS16 (136 aa).

This sequence belongs to the bacterial ribosomal protein bS16 family.

The protein is Small ribosomal subunit protein bS16 of Pseudarthrobacter chlorophenolicus (strain ATCC 700700 / DSM 12829 / CIP 107037 / JCM 12360 / KCTC 9906 / NCIMB 13794 / A6) (Arthrobacter chlorophenolicus).